The primary structure comprises 152 residues: Phospholipase A2 GL16-1 (152 aa).

The first 21 residues, 1-21 (MNPAHLLVLLAVCVSLLGAST), serve as a signal peptide directing secretion. The propeptide occupies 22-27 (IPPLPL). 7 cysteine pairs are disulfide-bonded: Cys-38–Cys-104, Cys-54–Cys-151, Cys-56–Cys-72, Cys-71–Cys-132, Cys-78–Cys-125, Cys-88–Cys-118, and Cys-111–Cys-123. Tyr-55, Gly-57, and Gly-59 together coordinate Ca(2+). Residue His-75 is part of the active site. Residue Asp-76 coordinates Ca(2+). Asp-126 is an active-site residue.

The protein belongs to the phospholipase A2 family. Group I subfamily. It depends on Ca(2+) as a cofactor.

The protein resides in the secreted. The enzyme catalyses a 1,2-diacyl-sn-glycero-3-phosphocholine + H2O = a 1-acyl-sn-glycero-3-phosphocholine + a fatty acid + H(+). Its function is as follows. PA2 catalyzes the calcium-dependent hydrolysis of the 2-acyl groups in 3-sn-phosphoglycerides. The chain is Phospholipase A2 GL16-1 from Laticauda semifasciata (Black-banded sea krait).